The following is a 407-amino-acid chain: Methylthioribose-1-phosphate isomerase (407 aa).

Asp275 serves as the catalytic Proton donor.

This sequence belongs to the eIF-2B alpha/beta/delta subunits family. MtnA subfamily.

It localises to the cytoplasm. Its subcellular location is the nucleus. It carries out the reaction 5-(methylsulfanyl)-alpha-D-ribose 1-phosphate = 5-(methylsulfanyl)-D-ribulose 1-phosphate. Its pathway is amino-acid biosynthesis; L-methionine biosynthesis via salvage pathway; L-methionine from S-methyl-5-thio-alpha-D-ribose 1-phosphate: step 1/6. Its function is as follows. Catalyzes the interconversion of methylthioribose-1-phosphate (MTR-1-P) into methylthioribulose-1-phosphate (MTRu-1-P). The protein is Methylthioribose-1-phosphate isomerase of Kluyveromyces lactis (strain ATCC 8585 / CBS 2359 / DSM 70799 / NBRC 1267 / NRRL Y-1140 / WM37) (Yeast).